A 331-amino-acid chain; its full sequence is Ornithine carbamoyltransferase (331 aa).

Carbamoyl phosphate-binding positions include 57-60, Gln-82, Arg-106, and 133-136; these read STRT and HPTQ. L-ornithine-binding positions include Asn-166, Asp-230, and 234 to 235; that span reads SM. Residues 272–273 and Arg-317 contribute to the carbamoyl phosphate site; that span reads CL.

Belongs to the aspartate/ornithine carbamoyltransferase superfamily. OTCase family.

The protein resides in the cytoplasm. The enzyme catalyses carbamoyl phosphate + L-ornithine = L-citrulline + phosphate + H(+). It functions in the pathway amino-acid degradation; L-arginine degradation via ADI pathway; carbamoyl phosphate from L-arginine: step 2/2. Its function is as follows. Reversibly catalyzes the transfer of the carbamoyl group from carbamoyl phosphate (CP) to the N(epsilon) atom of ornithine (ORN) to produce L-citrulline. The chain is Ornithine carbamoyltransferase from Clostridium perfringens (strain SM101 / Type A).